Reading from the N-terminus, the 88-residue chain is DNA-directed RNA polymerase subunit omega (88 aa).

The protein belongs to the RNA polymerase subunit omega family. As to quaternary structure, the RNAP catalytic core consists of 2 alpha, 1 beta, 1 beta' and 1 omega subunit. When a sigma factor is associated with the core the holoenzyme is formed, which can initiate transcription.

The enzyme catalyses RNA(n) + a ribonucleoside 5'-triphosphate = RNA(n+1) + diphosphate. In terms of biological role, promotes RNA polymerase assembly. Latches the N- and C-terminal regions of the beta' subunit thereby facilitating its interaction with the beta and alpha subunits. The polypeptide is DNA-directed RNA polymerase subunit omega (Actinobacillus succinogenes (strain ATCC 55618 / DSM 22257 / CCUG 43843 / 130Z)).